The primary structure comprises 341 residues: Anthranilate phosphoribosyltransferase (341 aa).

Residues G80, 83–84, T88, 90–93, 108–116, and S120 contribute to the 5-phospho-alpha-D-ribose 1-diphosphate site; these read GD, NIST, and KHGNRSVSS. Position 80 (G80) interacts with anthranilate. A Mg(2+)-binding site is contributed by S92. An anthranilate-binding site is contributed by N111. Position 166 (R166) interacts with anthranilate. Mg(2+) is bound by residues D225 and E226.

This sequence belongs to the anthranilate phosphoribosyltransferase family. In terms of assembly, homodimer. It depends on Mg(2+) as a cofactor.

The catalysed reaction is N-(5-phospho-beta-D-ribosyl)anthranilate + diphosphate = 5-phospho-alpha-D-ribose 1-diphosphate + anthranilate. It participates in amino-acid biosynthesis; L-tryptophan biosynthesis; L-tryptophan from chorismate: step 2/5. In terms of biological role, catalyzes the transfer of the phosphoribosyl group of 5-phosphorylribose-1-pyrophosphate (PRPP) to anthranilate to yield N-(5'-phosphoribosyl)-anthranilate (PRA). In Shouchella clausii (strain KSM-K16) (Alkalihalobacillus clausii), this protein is Anthranilate phosphoribosyltransferase.